The following is a 755-amino-acid chain: Dynamin-1-like protein (755 aa).

Met-1 is modified (N-acetylmethionine). Residues 22–315 (IIQLPQIVVV…LMHHIRDCLP (294 aa)) enclose the Dynamin-type G domain. Positions 32–39 (GTQSSGKS) are G1 motif. 32–40 (GTQSSGKSS) provides a ligand contact to GTP. The interval 58–60 (VTR) is G2 motif. The interval 159–162 (DLPG) is G3 motif. The G4 motif stretch occupies residues 228–231 (TKLD). Residues 228–234 (TKLDLMD) and 259–262 (NRSQ) each bind GTP. Residues 258-261 (VNRS) form a G5 motif region. The segment at 357–502 (YCNTIEGTAK…NEMVHNLVAI (146 aa)) is middle domain. The interval 461 to 704 (NYSTQELLRF…NHVKDTLQSE (244 aa)) is interaction with GSK3B. Residues 515–582 (ADACGLMNNN…IQDNRRETKN (68 aa)) are b domain. Residues 536–610 (ELPSAVSRDK…QEPTTGNWRG (75 aa)) form a disordered region. Ser-542 carries the post-translational modification Phosphoserine. Residues Lys-545 and Lys-548 each participate in a glycyl lysine isopeptide (Lys-Gly) (interchain with G-Cter in SUMO) cross-link. Low complexity predominate over residues 550–567 (PSALAPASQEPSPAASAE). At Ser-561 the chain carries Phosphoserine. Positions 568 to 581 (ADGKLIQDNRRETK) are enriched in basic and acidic residues. Residues Lys-571 and Lys-581 each participate in a glycyl lysine isopeptide (Lys-Gly) (interchain with G-Cter in SUMO) cross-link. The span at 586–600 (AGGGIGDGGRIGDGG) shows a compositional bias: gly residues. 2 O-linked (GlcNAc) threonine glycosylation sites follow: Thr-604 and Thr-605. A Glycyl lysine isopeptide (Lys-Gly) (interchain with G-Cter in SUMO) cross-link involves residue Lys-613. The residue at position 616 (Lys-616) is an N6-acetyllysine; alternate. A Glycyl lysine isopeptide (Lys-Gly) (interchain with G-Cter in SUMO); alternate cross-link involves residue Lys-616. Residue Lys-625 forms a Glycyl lysine isopeptide (Lys-Gly) (interchain with G-Cter in SUMO) linkage. A Phosphoserine modification is found at Ser-626. Residue Lys-627 forms a Glycyl lysine isopeptide (Lys-Gly) (interchain with G-Cter in SUMO) linkage. At Ser-635 the chain carries Phosphoserine; by CDK1. Ser-656 is subject to Phosphoserine; by CAMK1 and PKA. An S-nitrosocysteine modification is found at Cys-663. A GED domain is found at 663–754 (CEVIERLIKS…IIAEIRETHL (92 aa)). Residues 673–687 (YFLIVRKNIQDSVPK) are important for homodimerization.

This sequence belongs to the TRAFAC class dynamin-like GTPase superfamily. Dynamin/Fzo/YdjA family. In terms of assembly, homotetramer; dimerizes through the N-terminal GTP-middle region of one molecule binding to the GED domain of another DNM1L molecule. Oligomerizes in a GTP-dependent manner to form membrane-associated tubules with a spiral pattern. Interacts with GSK3B and MARCHF5. Interacts (via the GTPase and B domains) with UBE2I; the interaction promotes sumoylation of DNM1L, mainly in its B domain. Interacts with PPP3CA; the interaction dephosphorylates DNM1L and regulates its transition to mitochondria. Interacts with BCL2L1 isoform BCL-X(L) and CLTA; DNM1L and BCL2L1 isoform BCL-X(L) may form a complex in synaptic vesicles that also contains clathrin and MFF. Interacts with MFF; the interaction is inhinited by C11orf65/MFI. Interacts with FIS1. Interacts with MIEF2 and MIEF1; GTP-dependent this regulates GTP hydrolysis and DNM1L oligomerization. Interacts with PGAM5; this interaction leads to dephosphorylation at Ser-656 and activation of GTPase activity and eventually to mitochondria fragmentation. Interacts with RALBP1; during mitosis, recruits DNM1L to the mitochondrion and mediates its activation by the mitotic kinase cyclin B-CDK1. Interacts with FUNDC1; this interaction recruits DNM1L/DRP1 at ER-mitochondria contact sites. In terms of processing, phosphorylation/dephosphorylation events on two sites near the GED domain regulate mitochondrial fission. Phosphorylation on Ser-656 by CAMK1 and PKA inhibits the GTPase activity, leading to a defect in mitochondrial fission promoting mitochondrial elongation. Dephosphorylated on this site by PPP3CA which promotes mitochondrial fission. Phosphorylation on Ser-635 by PINK1 activates the GTPase activity and promotes mitochondrial fission. Phosphorylation on Ser-635 by CDK1 also promotes mitochondrial fission. Phosphorylated in a circadian manner at Ser-656. Dephosphorylated by PGAM5. Post-translationally, sumoylated on various lysine residues within the B domain, probably by MUL1. Sumoylation positively regulates mitochondrial fission. Desumoylated by SENP5 during G2/M transition of mitosis. Appears to be linked to its catalytic activity. S-nitrosylation increases DNM1L dimerization, mitochondrial fission and causes neuronal damage. In terms of processing, O-GlcNAcylation augments the level of the GTP-bound active form of DNM1L and induces translocation from the cytoplasm to mitochondria in cardiomyocytes. It also decreases phosphorylation at Ser-656. Post-translationally, ubiquitination by MARCHF5 affects mitochondrial morphology. Expressed in all tissues tested (at protein level). Longer isoforms are preferentially expressed in brain.

Its subcellular location is the cytoplasm. It localises to the cytosol. The protein resides in the golgi apparatus. The protein localises to the endomembrane system. It is found in the mitochondrion outer membrane. Its subcellular location is the peroxisome. It localises to the membrane. The protein resides in the clathrin-coated pit. The protein localises to the cytoplasmic vesicle. It is found in the secretory vesicle. Its subcellular location is the synaptic vesicle membrane. It carries out the reaction GTP + H2O = GDP + phosphate + H(+). Its function is as follows. Functions in mitochondrial and peroxisomal division. Mediates membrane fission through oligomerization into membrane-associated tubular structures that wrap around the scission site to constrict and sever the mitochondrial membrane through a GTP hydrolysis-dependent mechanism. The specific recruitment at scission sites is mediated by membrane receptors like MFF, MIEF1 and MIEF2 for mitochondrial membranes. While the recruitment by the membrane receptors is GTP-dependent, the following hydrolysis of GTP induces the dissociation from the receptors and allows DNM1L filaments to curl into closed rings that are probably sufficient to sever a double membrane. Acts downstream of PINK1 to promote mitochondrial fission in a PRKN-dependent manner. Plays an important role in mitochondrial fission during mitosis. Through its function in mitochondrial division, ensures the survival of at least some types of postmitotic neurons, including Purkinje cells, by suppressing oxidative damage. Required for normal brain development, including that of cerebellum. Facilitates developmentally regulated apoptosis during neural tube formation. Required for a normal rate of cytochrome c release and caspase activation during apoptosis; this requirement may depend upon the cell type and the physiological apoptotic cues. Required for formation of endocytic vesicles. Proposed to regulate synaptic vesicle membrane dynamics through association with BCL2L1 isoform Bcl-X(L) which stimulates its GTPase activity in synaptic vesicles; the function may require its recruitment by MFF to clathrin-containing vesicles. Required for programmed necrosis execution. Rhythmic control of its activity following phosphorylation at Ser-656 is essential for the circadian control of mitochondrial ATP production. This Rattus norvegicus (Rat) protein is Dynamin-1-like protein.